A 517-amino-acid polypeptide reads, in one-letter code: Urethanase (517 aa).

Catalysis depends on charge relay system residues Lys-98 and Ser-173. Catalysis depends on Ser-197, which acts as the Acyl-ester intermediate.

This sequence belongs to the amidase family. In terms of assembly, homooctamer.

The enzyme catalyses urethane + H2O + H(+) = ethanol + NH4(+) + CO2. Its activity is regulated as follows. Exhibits poor salt tolerance but excellent tolerance to low concentrations of ethanol. EDTA has almost no impact on activity. Activity is increased in the presence of Ca(2+), Mg(2+) and Co(3+) and inhibited in the presence of Al(3+), Zn(2+) and Cu(2+). Its function is as follows. Hydrolase that can catalyze the degradation of ethyl carbamate (also called urethane), a probable human carcinogen widely found in alcoholic beverages. Can also use methyl carbamate, butyl carbamate, acetamide and urea. Also catalyzes the enantioselective hydrolysis of 2-phenylpropionamide, alpha-chlorophenylacetamide, 2-methyl-3-phenylpropionamide and alpha-methoxyphenylacetamide to the corresponding acids. Is inactive on benzamide and L-glutamine. The polypeptide is Urethanase (Rhizobium radiobacter (Agrobacterium tumefaciens)).